We begin with the raw amino-acid sequence, 233 residues long: Large ribosomal subunit protein uL1 (233 aa).

The protein belongs to the universal ribosomal protein uL1 family. In terms of assembly, part of the 50S ribosomal subunit.

In terms of biological role, binds directly to 23S rRNA. The L1 stalk is quite mobile in the ribosome, and is involved in E site tRNA release. Protein L1 is also a translational repressor protein, it controls the translation of the L11 operon by binding to its mRNA. This is Large ribosomal subunit protein uL1 from Shewanella sp. (strain MR-4).